Here is a 359-residue protein sequence, read N- to C-terminus: UDP-3-O-acylglucosamine N-acyltransferase (359 aa).

H253 serves as the catalytic Proton acceptor.

Belongs to the transferase hexapeptide repeat family. LpxD subfamily. As to quaternary structure, homotrimer.

It carries out the reaction a UDP-3-O-[(3R)-3-hydroxyacyl]-alpha-D-glucosamine + a (3R)-hydroxyacyl-[ACP] = a UDP-2-N,3-O-bis[(3R)-3-hydroxyacyl]-alpha-D-glucosamine + holo-[ACP] + H(+). The protein operates within bacterial outer membrane biogenesis; LPS lipid A biosynthesis. Functionally, catalyzes the N-acylation of UDP-3-O-acylglucosamine using 3-hydroxyacyl-ACP as the acyl donor. Is involved in the biosynthesis of lipid A, a phosphorylated glycolipid that anchors the lipopolysaccharide to the outer membrane of the cell. The polypeptide is UDP-3-O-acylglucosamine N-acyltransferase (Burkholderia lata (strain ATCC 17760 / DSM 23089 / LMG 22485 / NCIMB 9086 / R18194 / 383)).